The chain runs to 567 residues: Septation ring formation regulator EzrA (567 aa).

Residues 1–2 (ME) lie on the Extracellular side of the membrane. Residues 3–21 (FIIGLIVILLALFSVGYFL) traverse the membrane as a helical segment. The Cytoplasmic segment spans residues 22-567 (RKNIYKEIDR…AQQEKEYQHQ (546 aa)). Coiled coils occupy residues 108 to 185 (IEDL…YEEE), 243 to 375 (KGYK…RDHV), and 402 to 529 (KGHL…ERRF).

This sequence belongs to the EzrA family.

It is found in the cell membrane. Functionally, negative regulator of FtsZ ring formation; modulates the frequency and position of FtsZ ring formation. Inhibits FtsZ ring formation at polar sites. Interacts either with FtsZ or with one of its binding partners to promote depolymerization. This chain is Septation ring formation regulator EzrA, found in Bacillus pumilus (strain SAFR-032).